Consider the following 93-residue polypeptide: Large ribosomal subunit protein uL23cz/uL23cy (93 aa).

It belongs to the universal ribosomal protein uL23 family. In terms of assembly, part of the 50S ribosomal subunit.

Its subcellular location is the plastid. It is found in the chloroplast. Binds to 23S rRNA. This chain is Large ribosomal subunit protein uL23cz/uL23cy (rpl23-A), found in Phaseolus angularis (Azuki bean).